The following is a 216-amino-acid chain: Talanin (216 aa).

In terms of tissue distribution, isoform 4 is expressed in placenta, lung, kidney and pancreas.

May play a role in uric acid excretion. This chain is Talanin (ZNF365), found in Homo sapiens (Human).